An 87-amino-acid polypeptide reads, in one-letter code: Translation initiation factor IF-1 2 (87 aa).

Residues 1-72 (MAKEEVIEME…TKGRINFRHK (72 aa)) enclose the S1-like domain.

The protein belongs to the IF-1 family. As to quaternary structure, component of the 30S ribosomal translation pre-initiation complex which assembles on the 30S ribosome in the order IF-2 and IF-3, IF-1 and N-formylmethionyl-tRNA(fMet); mRNA recruitment can occur at any time during PIC assembly.

The protein localises to the cytoplasm. In terms of biological role, one of the essential components for the initiation of protein synthesis. Stabilizes the binding of IF-2 and IF-3 on the 30S subunit to which N-formylmethionyl-tRNA(fMet) subsequently binds. Helps modulate mRNA selection, yielding the 30S pre-initiation complex (PIC). Upon addition of the 50S ribosomal subunit IF-1, IF-2 and IF-3 are released leaving the mature 70S translation initiation complex. The polypeptide is Translation initiation factor IF-1 2 (Thiobacillus denitrificans (strain ATCC 25259 / T1)).